A 769-amino-acid polypeptide reads, in one-letter code: Subtilisin-like protease 3 (769 aa).

Asn68, Asn102, Asn108, Asn295, Asn316, and Asn356 each carry an N-linked (GlcNAc...) asparagine glycan. Basic residues predominate over residues 293–302 (KINHSNKHKN). The tract at residues 293-329 (KINHSNKHKNNNNNNNNNDYHNNNKSNYHSHSSAKCQ) is disordered. Residues 303–325 (NNNNNNNNDYHNNNKSNYHSHSS) show a composition bias toward low complexity. Residues 345–756 (GYDIIQMEEG…GGFINVYDLV (412 aa)) enclose the Peptidase S8 domain. The Charge relay system role is filled by Asp372. The disordered stretch occupies residues 468 to 493 (NIKSSDNIKSSDNINSSDNIKSSDNN). N-linked (GlcNAc...) asparagine glycans are attached at residues Asn482 and Asn515. His523 serves as the catalytic Charge relay system. Asn584 and Asn616 each carry an N-linked (GlcNAc...) asparagine glycan. Ser701 (charge relay system) is an active-site residue. Asn720 carries N-linked (GlcNAc...) asparagine glycosylation.

This sequence belongs to the peptidase S8 family.

The protein resides in the secreted. It catalyses the reaction Hydrolysis of proteins with broad specificity for peptide bonds, and a preference for a large uncharged residue in P1. Hydrolyzes peptide amides.. Serine protease which may cleave PFN/profilin. The polypeptide is Subtilisin-like protease 3 (Plasmodium falciparum (isolate 3D7)).